The sequence spans 348 residues: Probable dual-specificity RNA methyltransferase RlmN (348 aa).

Residue E90 is the Proton acceptor of the active site. The 229-residue stretch at 96 to 324 (AAERLTVCVS…ASVRHTRGLE (229 aa)) folds into the Radical SAM core domain. Residues C103 and C329 are joined by a disulfide bond. C110, C114, and C117 together coordinate [4Fe-4S] cluster. S-adenosyl-L-methionine-binding positions include 157-158 (GE), S187, 210-212 (SLH), and N286. The S-methylcysteine intermediate role is filled by C329.

Belongs to the radical SAM superfamily. RlmN family. The cofactor is [4Fe-4S] cluster.

Its subcellular location is the cytoplasm. The enzyme catalyses adenosine(2503) in 23S rRNA + 2 reduced [2Fe-2S]-[ferredoxin] + 2 S-adenosyl-L-methionine = 2-methyladenosine(2503) in 23S rRNA + 5'-deoxyadenosine + L-methionine + 2 oxidized [2Fe-2S]-[ferredoxin] + S-adenosyl-L-homocysteine. The catalysed reaction is adenosine(37) in tRNA + 2 reduced [2Fe-2S]-[ferredoxin] + 2 S-adenosyl-L-methionine = 2-methyladenosine(37) in tRNA + 5'-deoxyadenosine + L-methionine + 2 oxidized [2Fe-2S]-[ferredoxin] + S-adenosyl-L-homocysteine. In terms of biological role, specifically methylates position 2 of adenine 2503 in 23S rRNA and position 2 of adenine 37 in tRNAs. This Gloeobacter violaceus (strain ATCC 29082 / PCC 7421) protein is Probable dual-specificity RNA methyltransferase RlmN.